The chain runs to 431 residues: Adenylosuccinate synthetase (431 aa).

Residues 12–18 and 40–42 each bind GTP; these read GDEGKGK and GHT. Asp13 functions as the Proton acceptor in the catalytic mechanism. Mg(2+) contacts are provided by Asp13 and Gly40. IMP contacts are provided by residues 13–16, 38–41, Thr129, Arg143, Gln224, Thr239, and Arg303; these read DEGK and NAGH. The active-site Proton donor is His41. 299 to 305 is a substrate binding site; that stretch reads TVSNRQR. GTP is bound by residues Arg305, 331–333, and 413–415; these read KLD and STG.

This sequence belongs to the adenylosuccinate synthetase family. Homodimer. Requires Mg(2+) as cofactor.

It localises to the cytoplasm. The enzyme catalyses IMP + L-aspartate + GTP = N(6)-(1,2-dicarboxyethyl)-AMP + GDP + phosphate + 2 H(+). It functions in the pathway purine metabolism; AMP biosynthesis via de novo pathway; AMP from IMP: step 1/2. In terms of biological role, plays an important role in the de novo pathway of purine nucleotide biosynthesis. Catalyzes the first committed step in the biosynthesis of AMP from IMP. The polypeptide is Adenylosuccinate synthetase (Ehrlichia canis (strain Jake)).